Reading from the N-terminus, the 445-residue chain is DNA primase DnaG (445 aa).

Residues 166–252 (DAIVVVEGRS…SVEDLSRSEV (87 aa)) form the Toprim domain. E172, D214, and D216 together coordinate Mg(2+). A disordered region spans residues 276-355 (EEMSQAGEST…NGDGPTIPSL (80 aa)). A compositionally biased stretch (low complexity) spans 284 to 298 (STTADGGAVAAATSD). The segment covering 303–313 (NQPSPSSQTGS) has biased composition (polar residues). Over residues 324–337 (SVVDNSNATAVADA) the composition is skewed to low complexity.

The protein belongs to the archaeal DnaG primase family. As to quaternary structure, forms a ternary complex with MCM helicase and DNA. Mg(2+) serves as cofactor.

It carries out the reaction ssDNA + n NTP = ssDNA/pppN(pN)n-1 hybrid + (n-1) diphosphate.. In terms of biological role, RNA polymerase that catalyzes the synthesis of short RNA molecules used as primers for DNA polymerase during DNA replication. This Haloarcula marismortui (strain ATCC 43049 / DSM 3752 / JCM 8966 / VKM B-1809) (Halobacterium marismortui) protein is DNA primase DnaG.